The sequence spans 271 residues: Shikimate dehydrogenase (NADP(+)) (271 aa).

Shikimate contacts are provided by residues 14–16 (SLS) and Thr61. Residue Lys65 is the Proton acceptor of the active site. The shikimate site is built by Asn86 and Asp101. Residues 125–129 (GAGGA) and Ile212 contribute to the NADP(+) site. Shikimate is bound at residue Tyr214. Residue Gly235 coordinates NADP(+).

It belongs to the shikimate dehydrogenase family. In terms of assembly, homodimer.

It carries out the reaction shikimate + NADP(+) = 3-dehydroshikimate + NADPH + H(+). It participates in metabolic intermediate biosynthesis; chorismate biosynthesis; chorismate from D-erythrose 4-phosphate and phosphoenolpyruvate: step 4/7. In terms of biological role, involved in the biosynthesis of the chorismate, which leads to the biosynthesis of aromatic amino acids. Catalyzes the reversible NADPH linked reduction of 3-dehydroshikimate (DHSA) to yield shikimate (SA). This is Shikimate dehydrogenase (NADP(+)) from Clostridium perfringens (strain SM101 / Type A).